We begin with the raw amino-acid sequence, 229 residues long: Large ribosomal subunit protein uL1 (229 aa).

This sequence belongs to the universal ribosomal protein uL1 family. Part of the 50S ribosomal subunit.

In terms of biological role, binds directly to 23S rRNA. The L1 stalk is quite mobile in the ribosome, and is involved in E site tRNA release. Functionally, protein L1 is also a translational repressor protein, it controls the translation of the L11 operon by binding to its mRNA. The chain is Large ribosomal subunit protein uL1 from Clostridium beijerinckii (strain ATCC 51743 / NCIMB 8052) (Clostridium acetobutylicum).